The following is a 759-amino-acid chain: MACTGPSLSGAFDILGAAGQDKLLYLKHKLKTLRPGCRGAYLLHAMVLLKLGQETEARISLEALKADAVAQLVARQWAGVDSTETPEEPPDLSWAVARVYHLLTEEKLCPATMREEAYRAALRAFRSRDDLQLGELQEEARDRCGWDVLGDLGGVQTLRSDLGCLPPSSASLSRTRSDPRPIEHLSGWSTACSLRSTGSPASLGSNLEISQSPTMALLSVHHSHHGPSKLCDHPQASVVPEPAPMGCQEPEEMSWPPSVEAADSPVRPSSPGPGLPEVTTDACPASPHDPPEVPEISAHYPVECTDVPAAPKSLPSPSKNTCLVTDQTPVQLSEEDTAYLSAQPRPPTPSVPQTSPSFPSASTSPFPSPSTPPEAHPTPSKAHPTPPKAHSTPPKAHPTSPKAHPTSPKAHPTVWNPEPPPPELESSEQKFYNFVVLHASADEHIALRVRERLEALGVHDGATFCEDFQVPGRGELHCLQDALDHSAFIILLLTSNFDCRLSQHQTNQSLMSSLTRHGWQDCVIPFLPLESSLAQLSPSTSSLLTGLVLLDEHSKIFARKVTNTFKPQMLRARKAKWRKEQDARALREQSQQLESERQHAAAWGAAYSAYVHSYLAYQTQVEKLQVALANYMPFGTQLPFGGQGSLGTPPSSFPTLPGHQPPPLPPWLGGTPPPIFPQPPQTFPQPPPTFPQPPPTFQQPPPACPQPLDFSQAPPARPQSPGLQPLIIHHAQMVQLGVNNHMWNQRGTQAPEDNTRETE.

Residues methionine 1–glycine 153 are TRIF-NTD. Residues glutamate 84 to aspartate 91 carry the TRAF6-binding motif. The pLxIS motif signature appears at leucine 207–serine 210. Serine 210 is subject to Phosphoserine. Lysine 229 is covalently cross-linked (Glycyl lysine isopeptide (Lys-Gly) (interchain with G-Cter in ubiquitin)). Residues glutamate 241–isoleucine 296 are disordered. 2 short sequence motifs (TRAF6-binding) span residues glutamine 248–tryptophan 255 and histidine 299–alanine 309. The segment at leucine 340–serine 426 is disordered. Residues valine 351–proline 365 are compositionally biased toward low complexity. Over residues phenylalanine 366–histidine 376 the composition is skewed to pro residues. One can recognise a TIR domain in the interval lysine 430 to serine 590. The sufficient to induce apoptosis stretch occupies residues leucine 549–glutamate 759. The disordered stretch occupies residues glycine 642–leucine 723. Residues histidine 659–proline 705 show a composition bias toward pro residues.

As to quaternary structure, homodimer. Found in a multi-helicase-TICAM1 complex at least composed of DHX36, DDX1, DDX21 and TICAM1; this complex exists in resting cells with or without poly(I:C) RNA ligand stimulation. Interacts (via TIR domain) with DDX21 (via C-terminus). Interacts (via TIR domain) with DHX36 (via C-terminus). Interacts with AZI2 and IRF7. Interacts with TICAM2 in TLR4 recruitment. Interaction with PIAS4 inhibits the TICAM1-induced NF-kappa-B, IRF and IFNB1 activation. Interacts with IKBKB and IKBKE. Interaction with SARM1 blocks TICAM1-dependent transcription factor activation. Interacts with TRAF3. Interacts (when phosphorylated) with IRF3; following activation and phosphorylation on the pLxIS motif by TBK1, recruits IRF3. Interacts with TBK1, TRAF6 and RIPK1 and these interactions are enhanced in the presence of WDFY1. Interacts with TRAFD1. Interacts with UBQLN1 (via UBA domain). Interacts with TLR4 in response to LPS in a WDFY1-dependent manner. Interacts with WDFY1 in response to poly(I:C). Interacts (via the TIR domain) with TLR3 in response to poly(I:C) and this interaction is enhanced in the presence of WDFY1. Interacts with TRIM56. Component of a multi-helicase-TICAM1 complex that acts as a cytoplasmic sensor of viral double-stranded RNA (dsRNA) and plays a role in the activation of a cascade of antiviral responses including the induction of pro-inflammatory cytokines. Interacts (via the TIR domain) with TLR5. Interacts with TRIM8. Interacts with TAX1BP1 and TRIM32; these interactions target TICAM1 to TAX1BP1-mediated selective autophagic degradation. Interacts with DDX50. Post-translationally, phosphorylated by TBK1. Following activation, phosphorylated by TBK1 at Ser-210 in the pLxIS motif. The phosphorylated pLxIS motif constitutes an IRF3-binding motif, leading to recruitment of the transcription factor IRF3 to induce type-I interferons and other cytokines. Polyubiquitinated at Lys-229 by TRIM38 with 'Lys-48'-linked chains, leading to proteasomal degradation. Polyubiquitinated with 'Lys-6' and 'Lys-33'-linked chains in a TRIM8-dependent manner.

Its subcellular location is the cytoplasmic vesicle. It is found in the autophagosome. The protein resides in the cytoplasm. The protein localises to the cytosol. It localises to the mitochondrion. Involved in innate immunity against invading pathogens. Adapter used by TLR3, TLR4 (through TICAM2) and TLR5 to mediate NF-kappa-B and interferon-regulatory factor (IRF) activation, and to induce apoptosis. Ligand binding to these receptors results in TRIF recruitment through its TIR domain. Distinct protein-interaction motifs allow recruitment of the effector proteins TBK1, TRAF6 and RIPK1, which in turn, lead to the activation of transcription factors IRF3 and IRF7, NF-kappa-B and FADD respectively. Phosphorylation by TBK1 on the pLxIS motif leads to recruitment and subsequent activation of the transcription factor IRF3 to induce expression of type I interferon and exert a potent immunity against invading pathogens. Component of a multi-helicase-TICAM1 complex that acts as a cytoplasmic sensor of viral double-stranded RNA (dsRNA) and plays a role in the activation of a cascade of antiviral responses including the induction of pro-inflammatory cytokines. The sequence is that of TIR domain-containing adapter molecule 1 (TICAM1) from Bos taurus (Bovine).